Consider the following 317-residue polypeptide: Malate dehydrogenase (317 aa).

NAD(+) contacts are provided by residues 7-13 and D34; that span reads GAAGGIG. The substrate site is built by R81 and R87. NAD(+) is bound by residues N94 and 117–119; that span reads VTN. The substrate site is built by N119 and R153. The active-site Proton acceptor is H177. Position 231 (M231) interacts with NAD(+).

Belongs to the LDH/MDH superfamily. MDH type 1 family. In terms of assembly, homodimer.

The catalysed reaction is (S)-malate + NAD(+) = oxaloacetate + NADH + H(+). Its function is as follows. Catalyzes the reversible oxidation of malate to oxaloacetate. The protein is Malate dehydrogenase of Actinobacillus pleuropneumoniae serotype 5b (strain L20).